We begin with the raw amino-acid sequence, 427 residues long: MESLTLQPIARVDGAINLPGSKSVSNRALLLAALACGKTVLTNLLDSDDVRHMLNALSALGIDYTLSADRTRCDIIGNGGALRAPGDLELFLGNAGTAMRPLAAALCLGQNETVLTGEPRMKERPIGHLVDSLRQGGANIDYLEQENYPPLRLRGGFTGGDIEVDGSVSSQFLTALLMTAPLAPKDTIIRVKGELVSKPYIDITLNLMKTFGVEIMNHHYQQFVVKGGQQYHSPGRYLVEGDASSASYFLAAGAIKGGTVKVTGIGRKSMQGDIRFADVLEKMGATITWGDDFIACTRGELHAIDMDMNHIPDAAMTIATTALFAKGTTTLRNIYNWRVKETDRLFAMATELRKVGAEVEEGDDYIRITPPAKLHHADIGTYNDHRMAMCFSLVALSDTPVTILDPKCTAKTFPDYFEQLARISTPA.

3-phosphoshikimate contacts are provided by Lys22, Ser23, and Arg27. Lys22 is a phosphoenolpyruvate binding site. Phosphoenolpyruvate is bound by residues Gly96 and Arg124. Residues Ser169, Ser170, Gln171, Ser197, Asp313, Asn336, and Lys340 each contribute to the 3-phosphoshikimate site. Gln171 provides a ligand contact to phosphoenolpyruvate. Asp313 (proton acceptor) is an active-site residue. Residues Arg344, Arg386, and Lys411 each coordinate phosphoenolpyruvate.

The protein belongs to the EPSP synthase family. Monomer.

It is found in the cytoplasm. The enzyme catalyses 3-phosphoshikimate + phosphoenolpyruvate = 5-O-(1-carboxyvinyl)-3-phosphoshikimate + phosphate. It participates in metabolic intermediate biosynthesis; chorismate biosynthesis; chorismate from D-erythrose 4-phosphate and phosphoenolpyruvate: step 6/7. Catalyzes the transfer of the enolpyruvyl moiety of phosphoenolpyruvate (PEP) to the 5-hydroxyl of shikimate-3-phosphate (S3P) to produce enolpyruvyl shikimate-3-phosphate and inorganic phosphate. This is 3-phosphoshikimate 1-carboxyvinyltransferase from Salmonella arizonae (strain ATCC BAA-731 / CDC346-86 / RSK2980).